We begin with the raw amino-acid sequence, 359 residues long: Peptide chain release factor 1 (359 aa).

An N5-methylglutamine modification is found at Q235. A disordered region spans residues 283–309 (QKAESERSQARRSQVGSGDRSERIRTY).

Belongs to the prokaryotic/mitochondrial release factor family. In terms of processing, methylated by PrmC. Methylation increases the termination efficiency of RF1.

It is found in the cytoplasm. In terms of biological role, peptide chain release factor 1 directs the termination of translation in response to the peptide chain termination codons UAG and UAA. The polypeptide is Peptide chain release factor 1 (Brucella abortus (strain S19)).